Consider the following 101-residue polypeptide: Chaperone modulatory protein CbpM (101 aa).

Belongs to the CbpM family.

Functionally, interacts with CbpA and inhibits both the DnaJ-like co-chaperone activity and the DNA binding activity of CbpA. Together with CbpA, modulates the activity of the DnaK chaperone system. Does not inhibit the co-chaperone activity of DnaJ. The protein is Chaperone modulatory protein CbpM of Pseudomonas putida (strain W619).